Consider the following 434-residue polypeptide: Monodehydroascorbate reductase 1, peroxisomal (434 aa).

FAD contacts are provided by residues 13–16 (GGVS), E40, R47, K52, I95, and 146–147 (RE). NAD(+) contacts are provided by residues 171–177 (GGYIGLE), E195, R201, and G260. 173–177 (YIGLE) is an NADP(+) binding site. The NADP(+) site is built by R201 and G260. Residue D297 participates in FAD binding. 313–314 (EH) contacts NAD(+). 313–314 (EH) contacts NADP(+). FAD is bound at residue V315. R319 contacts L-ascorbate. Residue Y348 coordinates FAD. Residue Y348 participates in NAD(+) binding. An NADP(+)-binding site is contributed by Y348. An L-ascorbate-binding site is contributed by R350. S416 is subject to Phosphoserine.

Belongs to the FAD-dependent oxidoreductase family. FAD serves as cofactor.

The protein resides in the peroxisome matrix. It carries out the reaction 2 monodehydro-L-ascorbate radical + NADH + H(+) = 2 L-ascorbate + NAD(+). Its function is as follows. Catalyzes the conversion of monodehydroascorbate to ascorbate, oxidizing NADH in the process. This Arabidopsis thaliana (Mouse-ear cress) protein is Monodehydroascorbate reductase 1, peroxisomal.